The chain runs to 628 residues: tRNA 5-methylaminomethyl-2-thiouridine biosynthesis bifunctional protein MnmC (628 aa).

A tRNA (mnm(5)s(2)U34)-methyltransferase region spans residues 1-237 (MSSYSPLVPP…KWHMTVGVRE (237 aa)). Residues 265-628 (VGGGLAGAGI…ADLLAAVAPR (364 aa)) are FAD-dependent cmnm(5)s(2)U34 oxidoreductase.

In the N-terminal section; belongs to the methyltransferase superfamily. tRNA (mnm(5)s(2)U34)-methyltransferase family. The protein in the C-terminal section; belongs to the DAO family. The cofactor is FAD.

It localises to the cytoplasm. It carries out the reaction 5-aminomethyl-2-thiouridine(34) in tRNA + S-adenosyl-L-methionine = 5-methylaminomethyl-2-thiouridine(34) in tRNA + S-adenosyl-L-homocysteine + H(+). Its function is as follows. Catalyzes the last two steps in the biosynthesis of 5-methylaminomethyl-2-thiouridine (mnm(5)s(2)U) at the wobble position (U34) in tRNA. Catalyzes the FAD-dependent demodification of cmnm(5)s(2)U34 to nm(5)s(2)U34, followed by the transfer of a methyl group from S-adenosyl-L-methionine to nm(5)s(2)U34, to form mnm(5)s(2)U34. The protein is tRNA 5-methylaminomethyl-2-thiouridine biosynthesis bifunctional protein MnmC of Bordetella petrii (strain ATCC BAA-461 / DSM 12804 / CCUG 43448).